The sequence spans 442 residues: C4-dicarboxylate transport protein 2 (442 aa).

The next 9 helical transmembrane spans lie at 20–39 (QLYV…GHYY), 52–74 (AFIK…TGIA), 89–111 (AMLY…ANVV), 141–158 (VTGF…GAFA), 162–179 (ILQV…LALV), 200–221 (LVSV…FTIG), 231–253 (LAML…LGAV), 342–364 (ILLL…AGFI), and 368–387 (ATLS…ILGV).

It belongs to the dicarboxylate/amino acid:cation symporter (DAACS) (TC 2.A.23) family.

The protein localises to the cell inner membrane. Its function is as follows. Responsible for the transport of dicarboxylates such as succinate, fumarate, and malate from the periplasm across the membrane. This transport system plays an important role in the energy supply of rhizobium-legume symbionts. This is C4-dicarboxylate transport protein 2 (dctA2) from Mesorhizobium japonicum (strain LMG 29417 / CECT 9101 / MAFF 303099) (Mesorhizobium loti (strain MAFF 303099)).